Reading from the N-terminus, the 244-residue chain is Glucosamine-6-phosphate deaminase (244 aa).

Asp67 functions as the Proton acceptor; for enolization step in the catalytic mechanism. Asn136 acts as the For ring-opening step in catalysis. Catalysis depends on His138, which acts as the Proton acceptor; for ring-opening step. The For ring-opening step role is filled by Glu143.

The protein belongs to the glucosamine/galactosamine-6-phosphate isomerase family. NagB subfamily.

It carries out the reaction alpha-D-glucosamine 6-phosphate + H2O = beta-D-fructose 6-phosphate + NH4(+). It functions in the pathway amino-sugar metabolism; N-acetylneuraminate degradation; D-fructose 6-phosphate from N-acetylneuraminate: step 5/5. Its function is as follows. Catalyzes the reversible isomerization-deamination of glucosamine 6-phosphate (GlcN6P) to form fructose 6-phosphate (Fru6P) and ammonium ion. The polypeptide is Glucosamine-6-phosphate deaminase (Clostridium botulinum (strain 657 / Type Ba4)).